Reading from the N-terminus, the 352-residue chain is Alanine racemase (352 aa).

The active-site Proton acceptor; specific for D-alanine is the Lys34. An N6-(pyridoxal phosphate)lysine modification is found at Lys34. Arg126 is a binding site for substrate. Tyr248 functions as the Proton acceptor; specific for L-alanine in the catalytic mechanism. Met296 serves as a coordination point for substrate.

The protein belongs to the alanine racemase family. It depends on pyridoxal 5'-phosphate as a cofactor.

It catalyses the reaction L-alanine = D-alanine. It functions in the pathway amino-acid biosynthesis; D-alanine biosynthesis; D-alanine from L-alanine: step 1/1. In terms of biological role, catalyzes the interconversion of L-alanine and D-alanine. May also act on other amino acids. The chain is Alanine racemase (alr) from Deinococcus deserti (strain DSM 17065 / CIP 109153 / LMG 22923 / VCD115).